A 159-amino-acid polypeptide reads, in one-letter code: Peptide deformylase (159 aa).

Positions 88 and 130 each coordinate Fe cation. Residue glutamate 131 is part of the active site. Histidine 134 is a Fe cation binding site.

The protein belongs to the polypeptide deformylase family. Fe(2+) is required as a cofactor.

It carries out the reaction N-terminal N-formyl-L-methionyl-[peptide] + H2O = N-terminal L-methionyl-[peptide] + formate. In terms of biological role, removes the formyl group from the N-terminal Met of newly synthesized proteins. Requires at least a dipeptide for an efficient rate of reaction. N-terminal L-methionine is a prerequisite for activity but the enzyme has broad specificity at other positions. The protein is Peptide deformylase of Thermoanaerobacter pseudethanolicus (strain ATCC 33223 / 39E) (Clostridium thermohydrosulfuricum).